The primary structure comprises 361 residues: Phospho-N-acetylmuramoyl-pentapeptide-transferase (361 aa).

10 helical membrane-spanning segments follow: residues 27-47 (GAMVTGALFVFLFGPWIIDHL), 72-92 (TPTMGGLMILSGLVVSTLLWA), 94-114 (LHNPYVWVVLMVTLGFGFVGF), 133-153 (LRLAVEGLIALFACLVIIWAG), 169-189 (FAINLGWFYLVFGAFIIVGAG), 200-220 (GLAIVPVMIAAASFGMIAYLV), 240-260 (LAVLCGAVLGAGLGFLWFNAP), 264-284 (IFMGDTGSLALGGMIGSIAVA), 289-309 (IVLAVIGGLFVFEALSVIVQV), and 338-358 (QIVIRFWIIAVMLALAGLSTL).

It belongs to the glycosyltransferase 4 family. MraY subfamily. Mg(2+) serves as cofactor.

It localises to the cell inner membrane. The catalysed reaction is UDP-N-acetyl-alpha-D-muramoyl-L-alanyl-gamma-D-glutamyl-meso-2,6-diaminopimeloyl-D-alanyl-D-alanine + di-trans,octa-cis-undecaprenyl phosphate = di-trans,octa-cis-undecaprenyl diphospho-N-acetyl-alpha-D-muramoyl-L-alanyl-D-glutamyl-meso-2,6-diaminopimeloyl-D-alanyl-D-alanine + UMP. The protein operates within cell wall biogenesis; peptidoglycan biosynthesis. In terms of biological role, catalyzes the initial step of the lipid cycle reactions in the biosynthesis of the cell wall peptidoglycan: transfers peptidoglycan precursor phospho-MurNAc-pentapeptide from UDP-MurNAc-pentapeptide onto the lipid carrier undecaprenyl phosphate, yielding undecaprenyl-pyrophosphoryl-MurNAc-pentapeptide, known as lipid I. This chain is Phospho-N-acetylmuramoyl-pentapeptide-transferase, found in Afipia carboxidovorans (strain ATCC 49405 / DSM 1227 / KCTC 32145 / OM5) (Oligotropha carboxidovorans).